A 432-amino-acid chain; its full sequence is Putative D-alanyl-D-alanine carboxypeptidase (432 aa).

Residues 7-25 (ATVLLTFSLSAFAVEYPVL) form a helical; Signal-anchor membrane-spanning segment.

It belongs to the peptidase S12 family. YfeW subfamily.

It is found in the cell inner membrane. The enzyme catalyses Preferential cleavage: (Ac)2-L-Lys-D-Ala-|-D-Ala. Also transpeptidation of peptidyl-alanyl moieties that are N-acyl substituents of D-alanine.. This is Putative D-alanyl-D-alanine carboxypeptidase from Salmonella typhimurium (strain LT2 / SGSC1412 / ATCC 700720).